A 275-amino-acid polypeptide reads, in one-letter code: Chlorophyll a-b binding protein 3, chloroplastic (275 aa).

Trp58 contributes to the chlorophyll b binding site. Phe78, Ser84, and Glu102 together coordinate chlorophyll a. The chlorophyll b site is built by Arg107, Ile142, Glu169, and Arg172. Chlorophyll a is bound by residues Lys226, Glu227, Asn230, Arg232, Gln244, and His259. A helical transmembrane segment spans residues 233–253 (LAMLAILGYFIQGLVTGVGPY).

The protein belongs to the light-harvesting chlorophyll a/b-binding (LHC) protein family. In terms of assembly, the LHC complex consists of chlorophyll a-b binding proteins. The cofactor is Binds at least 14 chlorophylls (8 Chl-a and 6 Chl-b) and carotenoids such as lutein and neoxanthin.. Post-translationally, photoregulated by reversible phosphorylation of its threonine residues.

Its subcellular location is the plastid. The protein localises to the chloroplast thylakoid membrane. Its function is as follows. The light-harvesting complex (LHC) functions as a light receptor, it captures and delivers excitation energy to photosystems with which it is closely associated. In terms of biological role, may channel protons produced in the catalytic Mn center of water oxidation into the thylakoid lumen. The sequence is that of Chlorophyll a-b binding protein 3, chloroplastic from Pisum sativum (Garden pea).